Reading from the N-terminus, the 428-residue chain is Histidinol dehydrogenase (428 aa).

NAD(+) is bound by residues Tyr-127, Gln-185, and Asn-208. 3 residues coordinate substrate: Ser-232, Gln-254, and His-257. Gln-254 and His-257 together coordinate Zn(2+). Active-site proton acceptor residues include Glu-321 and His-322. Positions 322, 355, 409, and 414 each coordinate substrate. Position 355 (Asp-355) interacts with Zn(2+). A Zn(2+)-binding site is contributed by His-414.

It belongs to the histidinol dehydrogenase family. Requires Zn(2+) as cofactor.

It carries out the reaction L-histidinol + 2 NAD(+) + H2O = L-histidine + 2 NADH + 3 H(+). Its pathway is amino-acid biosynthesis; L-histidine biosynthesis; L-histidine from 5-phospho-alpha-D-ribose 1-diphosphate: step 9/9. In terms of biological role, catalyzes the sequential NAD-dependent oxidations of L-histidinol to L-histidinaldehyde and then to L-histidine. The chain is Histidinol dehydrogenase from Pasteurella multocida (strain Pm70).